The chain runs to 315 residues: Beta-carotene hydroxylase 1, chloroplastic (315 aa).

Residues 1-58 (MAAEISISASSRAICLQRNPFPAPKYFATAPPLLFFSPLTCNLDAILRSRRKPRLAAC) constitute a chloroplast transit peptide. 2 helical membrane-spanning segments follow: residues 112–132 (YLVA…ISVY) and 146–166 (FSEM…MEYW). Residues 159-286 (AAIGMEYWAR…KFDGVPYGLF (128 aa)) form the Fatty acid hydroxylase domain. A Histidine box-1 motif is present at residues 171–176 (HRALWH). The Histidine box-2 signature appears at 183-187 (HESHH). Transmembrane regions (helical) follow at residues 196–216 (LNDI…SFGF) and 222–242 (IPGL…AYMF). The short motif at 244 to 249 (HDGLVH) is the Histidine box-3 element. A Histidine box-4 motif is present at residues 270–274 (HQLHH).

The protein belongs to the sterol desaturase family.

The protein resides in the plastid. Its subcellular location is the chloroplast membrane. The enzyme catalyses all-trans-beta-carotene + 4 reduced [2Fe-2S]-[ferredoxin] + 2 O2 + 4 H(+) = all-trans-zeaxanthin + 4 oxidized [2Fe-2S]-[ferredoxin] + 2 H2O. The catalysed reaction is all-trans-beta-carotene + 2 reduced [2Fe-2S]-[ferredoxin] + O2 + 2 H(+) = beta-cryptoxanthin + 2 oxidized [2Fe-2S]-[ferredoxin] + H2O. It carries out the reaction beta-cryptoxanthin + 2 reduced [2Fe-2S]-[ferredoxin] + O2 + 2 H(+) = all-trans-zeaxanthin + 2 oxidized [2Fe-2S]-[ferredoxin] + H2O. With respect to regulation, inhibited by o-phenanthroline and 8-hydroxyquinoline. Nonheme diiron monooxygenase involved in the biosynthesis of xanthophylls. Specific for beta-ring hydroxylations of beta-carotene. Produces beta-cryptoxanthin and zeaxanthin. Uses ferredoxin as an electron donor. The polypeptide is Beta-carotene hydroxylase 1, chloroplastic (Capsicum annuum (Capsicum pepper)).